The chain runs to 452 residues: Pup--protein ligase (452 aa).

Glu-9 contributes to the Mg(2+) binding site. Residue Arg-53 participates in ATP binding. A Mg(2+)-binding site is contributed by Tyr-55. Asp-57 functions as the Proton acceptor in the catalytic mechanism. A Mg(2+)-binding site is contributed by Glu-63. Positions 66 and 419 each coordinate ATP.

The protein belongs to the Pup ligase/Pup deamidase family. Pup-conjugating enzyme subfamily.

The enzyme catalyses ATP + [prokaryotic ubiquitin-like protein]-L-glutamate + [protein]-L-lysine = ADP + phosphate + N(6)-([prokaryotic ubiquitin-like protein]-gamma-L-glutamyl)-[protein]-L-lysine.. It participates in protein degradation; proteasomal Pup-dependent pathway. The protein operates within protein modification; protein pupylation. In terms of biological role, catalyzes the covalent attachment of the prokaryotic ubiquitin-like protein modifier Pup to the proteasomal substrate proteins, thereby targeting them for proteasomal degradation. This tagging system is termed pupylation. The ligation reaction involves the side-chain carboxylate of the C-terminal glutamate of Pup and the side-chain amino group of a substrate lysine. The chain is Pup--protein ligase from Mycobacterium ulcerans (strain Agy99).